A 349-amino-acid polypeptide reads, in one-letter code: ATPase GET3 (349 aa).

Residue 26–33 coordinates ATP; that stretch reads KGGVGKTT. Aspartate 57 is an active-site residue. Residues glutamate 240 and asparagine 267 each contribute to the ATP site. Zn(2+) is bound by residues cysteine 280 and cysteine 283.

The protein belongs to the arsA ATPase family. Homodimer. Component of the Golgi to ER traffic (GET) complex, which is composed of GET1, GET2 and GET3. Within the complex, GET1 and GET2 form a heterotetramer which is stabilized by phosphatidylinositol binding and which binds to the GET3 homodimer. Interacts with the chloride channel protein GEF1.

It is found in the cytoplasm. It localises to the endoplasmic reticulum. The protein localises to the golgi apparatus. ATPase required for the post-translational delivery of tail-anchored (TA) proteins to the endoplasmic reticulum. Recognizes and selectively binds the transmembrane domain of TA proteins in the cytosol. This complex then targets to the endoplasmic reticulum by membrane-bound receptors GET1 and GET2, where the tail-anchored protein is released for insertion. This process is regulated by ATP binding and hydrolysis. ATP binding drives the homodimer towards the closed dimer state, facilitating recognition of newly synthesized TA membrane proteins. ATP hydrolysis is required for insertion. Subsequently, the homodimer reverts towards the open dimer state, lowering its affinity for the GET1-GET2 receptor, and returning it to the cytosol to initiate a new round of targeting. Cooperates with the HDEL receptor ERD2 to mediate the ATP-dependent retrieval of resident ER proteins that contain a C-terminal H-D-E-L retention signal from the Golgi to the ER. Involved in low-level resistance to the oxyanions arsenite and arsenate, and in heat tolerance. The sequence is that of ATPase GET3 from Kluyveromyces lactis (strain ATCC 8585 / CBS 2359 / DSM 70799 / NBRC 1267 / NRRL Y-1140 / WM37) (Yeast).